The sequence spans 156 residues: Small ribosomal subunit protein uS7c (156 aa).

Belongs to the universal ribosomal protein uS7 family. In terms of assembly, part of the 30S ribosomal subunit.

Its subcellular location is the plastid. It is found in the chloroplast. One of the primary rRNA binding proteins, it binds directly to 16S rRNA where it nucleates assembly of the head domain of the 30S subunit. In Pyropia yezoensis (Susabi-nori), this protein is Small ribosomal subunit protein uS7c (rps7).